We begin with the raw amino-acid sequence, 592 residues long: MDPNSILLSPQPQICSHLAEACTEGERSSSPPELDRDSPFPWSQVPSSSPTDPEWFGDEHIQAKRARVETIVRGMCLSPNPLVPGNAQAGVSPRCPKKARERKRKQNLPTPQGLLMPAPAWDQGNRKGGPRVREQLHLLKQQLRHLQEHILQAAKPRDTAQGPGGCGTGKGPLSAKQGNGCGPRPWVVDGDHQQGTSKDLSGAEKHQESEKPSFLPSGAPASLEILRKELTRAVSQAVDSVLQKVLLDPPGHLTQLGRSFQGQVAEGRSEPSPPVGGACKDPLALAALPRRVQLQAGVPVGNLSLAKRLDSPRYPIPPRMTPKPCQDPPANFPLTAPSHIQENQILSQLLGHRYNNGHWSSSPPQDSSSQRHPSSEPALRPWRTTKPQPLVLSQQQCPLPFTSAHLESLPLLPSVKMEQRGLHAVMEALPFSLLHIQEGLNPGHLKKAKLMFFFTRYPSSNLLKVYFPDVQFNRCITSQMIKWFSNFREFYYIQMEKSARQAISDGVTNPKMLVVLRNSELFQALNMHYNKGNDFEVPDCFLEIASLTLQEFFRAVSAGRDSDPSWKKPIYKIISKLDSDIPEIFKSSSYPQ.

Disordered stretches follow at residues 20-56 (EACT…PEWF), 85-129 (GNAQ…RKGG), 155-218 (KPRD…LPSG), 308-336 (RLDS…PLTA), and 353-382 (RYNN…LRPW). Residues 95–106 (CPKKARERKRKQ) show a composition bias toward basic residues. Residues 201-211 (SGAEKHQESEK) show a composition bias toward basic and acidic residues. Residues 314–331 (YPIPPRMTPKPCQDPPAN) are compositionally biased toward pro residues. Low complexity predominate over residues 360–377 (SSSPPQDSSSQRHPSSEP). In terms of domain architecture, Prospero-type homeo spans 437–495 (QEGLNPGHLKKAKLMFFFTRYPSSNLLKVYFPDVQFNRCITSQMIKWFSNFREFYYIQM). The homeo-Prospero stretch occupies residues 437-592 (QEGLNPGHLK…EIFKSSSYPQ (156 aa)). The region spanning 496–592 (EKSARQAISD…EIFKSSSYPQ (97 aa)) is the Prospero domain.

It belongs to the Prospero homeodomain family.

The protein localises to the nucleus. Functionally, transcription regulator. Does not seem to be essential for embryonic development and postnatal survival. This is Prospero homeobox protein 2 (PROX2) from Homo sapiens (Human).